Reading from the N-terminus, the 510-residue chain is Cytochrome P450 705A20 (510 aa).

A helical transmembrane segment spans residues 7 to 27; the sequence is QHCFSFILLCFFSLLCYSLLF.

The protein belongs to the cytochrome P450 family. The cofactor is heme.

Its subcellular location is the membrane. The polypeptide is Cytochrome P450 705A20 (CYP705A20) (Arabidopsis thaliana (Mouse-ear cress)).